The sequence spans 83 residues: uncharacterized protein (83 aa).

A run of 2 helical transmembrane segments spans residues 23 to 43 (FSLW…QLIK) and 56 to 76 (TIFV…CVFL).

It is found in the cell membrane. This is an uncharacterized protein from Bacillus subtilis (strain 168).